A 281-amino-acid chain; its full sequence is Probable endonuclease 4 (281 aa).

Zn(2+)-binding residues include His69, His109, Glu145, Asp179, His182, His216, Asp229, His231, and Glu261.

It belongs to the AP endonuclease 2 family. The cofactor is Zn(2+).

It carries out the reaction Endonucleolytic cleavage to 5'-phosphooligonucleotide end-products.. Endonuclease IV plays a role in DNA repair. It cleaves phosphodiester bonds at apurinic or apyrimidinic (AP) sites, generating a 3'-hydroxyl group and a 5'-terminal sugar phosphate. The sequence is that of Probable endonuclease 4 from Aeromonas hydrophila subsp. hydrophila (strain ATCC 7966 / DSM 30187 / BCRC 13018 / CCUG 14551 / JCM 1027 / KCTC 2358 / NCIMB 9240 / NCTC 8049).